A 152-amino-acid chain; its full sequence is UPF0178 protein SaurJH9_0705 (152 aa).

It belongs to the UPF0178 family.

This Staphylococcus aureus (strain JH9) protein is UPF0178 protein SaurJH9_0705.